The following is a 370-amino-acid chain: Peptide chain release factor 2 (370 aa).

Gln249 bears the N5-methylglutamine mark.

The protein belongs to the prokaryotic/mitochondrial release factor family. Post-translationally, methylated by PrmC. Methylation increases the termination efficiency of RF2.

The protein localises to the cytoplasm. In terms of biological role, peptide chain release factor 2 directs the termination of translation in response to the peptide chain termination codons UGA and UAA. The polypeptide is Peptide chain release factor 2 (Kosmotoga olearia (strain ATCC BAA-1733 / DSM 21960 / TBF 19.5.1)).